We begin with the raw amino-acid sequence, 569 residues long: Dihydroxy-acid dehydratase (569 aa).

Cys61 is a binding site for [2Fe-2S] cluster. Asp93 is a Mg(2+) binding site. Cys134 contributes to the [2Fe-2S] cluster binding site. The Mg(2+) site is built by Asp135 and Lys136. Lys136 bears the N6-carboxylysine mark. Cys211 is a binding site for [2Fe-2S] cluster. A Mg(2+)-binding site is contributed by Glu462. Ser488 acts as the Proton acceptor in catalysis.

It belongs to the IlvD/Edd family. As to quaternary structure, homodimer. [2Fe-2S] cluster is required as a cofactor. Mg(2+) serves as cofactor.

It catalyses the reaction (2R)-2,3-dihydroxy-3-methylbutanoate = 3-methyl-2-oxobutanoate + H2O. It carries out the reaction (2R,3R)-2,3-dihydroxy-3-methylpentanoate = (S)-3-methyl-2-oxopentanoate + H2O. It participates in amino-acid biosynthesis; L-isoleucine biosynthesis; L-isoleucine from 2-oxobutanoate: step 3/4. Its pathway is amino-acid biosynthesis; L-valine biosynthesis; L-valine from pyruvate: step 3/4. Functionally, functions in the biosynthesis of branched-chain amino acids. Catalyzes the dehydration of (2R,3R)-2,3-dihydroxy-3-methylpentanoate (2,3-dihydroxy-3-methylvalerate) into 2-oxo-3-methylpentanoate (2-oxo-3-methylvalerate) and of (2R)-2,3-dihydroxy-3-methylbutanoate (2,3-dihydroxyisovalerate) into 2-oxo-3-methylbutanoate (2-oxoisovalerate), the penultimate precursor to L-isoleucine and L-valine, respectively. The sequence is that of Dihydroxy-acid dehydratase from Tropheryma whipplei (strain Twist) (Whipple's bacillus).